The sequence spans 319 residues: Serine acetyltransferase, plasmid (319 aa).

This sequence belongs to the transferase hexapeptide repeat family.

The protein resides in the cytoplasm. The enzyme catalyses L-serine + acetyl-CoA = O-acetyl-L-serine + CoA. Its pathway is amino-acid biosynthesis; L-cysteine biosynthesis; L-cysteine from L-serine: step 1/2. The protein is Serine acetyltransferase, plasmid (srpH) of Synechococcus elongatus (strain ATCC 33912 / PCC 7942 / FACHB-805) (Anacystis nidulans R2).